Here is a 725-residue protein sequence, read N- to C-terminus: Glyoxysomal fatty acid beta-oxidation multifunctional protein MFP-a (725 aa).

Residue E119 is the Nucleophile of the active site. The Proton acceptor role is filled by E139. A Microbody targeting signal motif is present at residues 723–725 (SRL).

The protein in the N-terminal section; belongs to the enoyl-CoA hydratase/isomerase family. This sequence in the central section; belongs to the 3-hydroxyacyl-CoA dehydrogenase family.

It is found in the glyoxysome. It catalyses the reaction a (3S)-3-hydroxyacyl-CoA = a (2E)-enoyl-CoA + H2O. The enzyme catalyses a 4-saturated-(3S)-3-hydroxyacyl-CoA = a (3E)-enoyl-CoA + H2O. The catalysed reaction is a (3Z)-enoyl-CoA = a 4-saturated (2E)-enoyl-CoA. It carries out the reaction a (3E)-enoyl-CoA = a 4-saturated (2E)-enoyl-CoA. It catalyses the reaction (3S)-3-hydroxybutanoyl-CoA = (3R)-3-hydroxybutanoyl-CoA. The enzyme catalyses a (3S)-3-hydroxyacyl-CoA + NAD(+) = a 3-oxoacyl-CoA + NADH + H(+). It participates in lipid metabolism; fatty acid beta-oxidation. The protein is Glyoxysomal fatty acid beta-oxidation multifunctional protein MFP-a of Brassica napus (Rape).